The following is a 206-amino-acid chain: N-(5'-phosphoribosyl)anthranilate isomerase (206 aa).

Belongs to the TrpF family.

The catalysed reaction is N-(5-phospho-beta-D-ribosyl)anthranilate = 1-(2-carboxyphenylamino)-1-deoxy-D-ribulose 5-phosphate. Its pathway is amino-acid biosynthesis; L-tryptophan biosynthesis; L-tryptophan from chorismate: step 3/5. The polypeptide is N-(5'-phosphoribosyl)anthranilate isomerase (Pseudomonas savastanoi pv. phaseolicola (strain 1448A / Race 6) (Pseudomonas syringae pv. phaseolicola (strain 1448A / Race 6))).